Reading from the N-terminus, the 239-residue chain is Ubiquinone biosynthesis O-methyltransferase (239 aa).

4 residues coordinate S-adenosyl-L-methionine: Arg-44, Gly-63, Asp-84, and Met-128.

This sequence belongs to the methyltransferase superfamily. UbiG/COQ3 family.

The catalysed reaction is a 3-demethylubiquinol + S-adenosyl-L-methionine = a ubiquinol + S-adenosyl-L-homocysteine + H(+). The enzyme catalyses a 3-(all-trans-polyprenyl)benzene-1,2-diol + S-adenosyl-L-methionine = a 2-methoxy-6-(all-trans-polyprenyl)phenol + S-adenosyl-L-homocysteine + H(+). Its pathway is cofactor biosynthesis; ubiquinone biosynthesis. O-methyltransferase that catalyzes the 2 O-methylation steps in the ubiquinone biosynthetic pathway. The chain is Ubiquinone biosynthesis O-methyltransferase from Xanthomonas euvesicatoria pv. vesicatoria (strain 85-10) (Xanthomonas campestris pv. vesicatoria).